A 790-amino-acid polypeptide reads, in one-letter code: Pre-mRNA-splicing factor cwf3 (790 aa).

HAT repeat units follow at residues 12-44 (DLIN…THEG), 45-77 (STLE…LRVA), 89-121 (EAFA…FLMK), 123-157 (PNVT…YAED), 159-190 (GGLF…KLGL), 193-228 (EAAR…LVVQ), 233-266 (TQNI…YYIR), 268-303 (GDYE…FEEQ), 331-364 (KILD…FLED), 368-402 (KVVQ…FYEN), 404-440 (DDLE…MELR), 457-492 (APRK…LEES), 494-526 (GTIE…LLEE), 528-562 (AYFE…KFVK), 567-601 (THME…FEEK), 639-673 (YGVL…METK), and 675-709 (GEID…FEIR). The segment at 769 to 790 (LAGFVLSKSNPQETSKITGEEN) is disordered. A compositionally biased stretch (polar residues) spans 775–790 (SKSNPQETSKITGEEN).

It belongs to the crooked-neck family. Belongs to the 40S cdc5-associated complex (or cwf complex), a spliceosome sub-complex reminiscent of a late-stage spliceosome composed of the U2, U5 and U6 snRNAs and at least brr2, cdc5, cwf2/prp3, cwf3/syf1, cwf4/syf3, cwf5/ecm2, spp42/cwf6, cwf7/spf27, cwf8, cwf9, cwf10, cwf11, cwf12, prp45/cwf13, cwf14, cwf15, cwf16, cwf17, cwf18, cwf19, cwf20, cwf21, cwf22, cwf23, cwf24, cwf25, cwf26, cyp7/cwf27, cwf28, cwf29/ist3, lea1, msl1, prp5/cwf1, prp10, prp12/sap130, prp17, prp22, sap61, sap62, sap114, sap145, slu7, smb1, smd1, smd3, smf1, smg1 and syf2.

The protein localises to the nucleus. Involved in pre-mRNA splicing and cell cycle progression. This is Pre-mRNA-splicing factor cwf3 (cwf3) from Schizosaccharomyces pombe (strain 972 / ATCC 24843) (Fission yeast).